Reading from the N-terminus, the 37-residue chain is Large ribosomal subunit protein bL36A (37 aa).

Belongs to the bacterial ribosomal protein bL36 family.

In Arthrobacter sp. (strain FB24), this protein is Large ribosomal subunit protein bL36A.